A 402-amino-acid polypeptide reads, in one-letter code: tRNA(Met) cytidine acetate ligase (402 aa).

Residues 7–20 (ITEY…HELH), Gly-102, Asn-171, and Arg-196 each bind ATP.

The protein belongs to the TmcAL family.

The protein resides in the cytoplasm. The catalysed reaction is cytidine(34) in elongator tRNA(Met) + acetate + ATP = N(4)-acetylcytidine(34) in elongator tRNA(Met) + AMP + diphosphate. Its function is as follows. Catalyzes the formation of N(4)-acetylcytidine (ac(4)C) at the wobble position of elongator tRNA(Met), using acetate and ATP as substrates. First activates an acetate ion to form acetyladenylate (Ac-AMP) and then transfers the acetyl group to tRNA to form ac(4)C34. This Clostridium perfringens (strain ATCC 13124 / DSM 756 / JCM 1290 / NCIMB 6125 / NCTC 8237 / Type A) protein is tRNA(Met) cytidine acetate ligase.